The primary structure comprises 119 residues: Small ribosomal subunit protein uS10 (119 aa).

Belongs to the universal ribosomal protein uS10 family. As to quaternary structure, component of the 40S small ribosomal subunit.

The protein localises to the cytoplasm. Its function is as follows. Component of the small ribosomal subunit. The ribosome is a large ribonucleoprotein complex responsible for the synthesis of proteins in the cell. The sequence is that of Small ribosomal subunit protein uS10 (rps20) from Xenopus laevis (African clawed frog).